The sequence spans 78 residues: Putative membrane protein insertion efficiency factor (78 aa).

This sequence belongs to the UPF0161 family.

It localises to the cell inner membrane. Could be involved in insertion of integral membrane proteins into the membrane. This Prochlorococcus marinus (strain MIT 9312) protein is Putative membrane protein insertion efficiency factor.